A 348-amino-acid polypeptide reads, in one-letter code: Dihydroorotase (348 aa).

His14 and His16 together coordinate Zn(2+). Residues 16-18 and Asn42 contribute to the substrate site; that span reads HLR. The Zn(2+) site is built by Lys100, His137, and His175. Position 100 is an N6-carboxylysine (Lys100). Residue His137 participates in substrate binding. Leu220 serves as a coordination point for substrate. Asp248 is a binding site for Zn(2+). Asp248 is an active-site residue. Substrate is bound by residues His252 and Ala264.

Belongs to the metallo-dependent hydrolases superfamily. DHOase family. Class II DHOase subfamily. In terms of assembly, homodimer. The cofactor is Zn(2+).

It catalyses the reaction (S)-dihydroorotate + H2O = N-carbamoyl-L-aspartate + H(+). The protein operates within pyrimidine metabolism; UMP biosynthesis via de novo pathway; (S)-dihydroorotate from bicarbonate: step 3/3. Functionally, catalyzes the reversible cyclization of carbamoyl aspartate to dihydroorotate. This Pseudomonas fluorescens (strain SBW25) protein is Dihydroorotase.